A 967-amino-acid polypeptide reads, in one-letter code: Translation initiation factor IF-2 (967 aa).

The segment at 34 to 363 (ASSTVEPPVA…APAVGGVSVP (330 aa)) is disordered. Low complexity-rich tracts occupy residues 51-96 (PAGG…GNAA) and 103-154 (ASEA…TPGP). The segment covering 184–196 (RSEGGAQRGGPRP) has biased composition (gly residues). Residues 197–206 (GGQQRSGKPG) show a composition bias toward low complexity. Residues 300–333 (PRRGGGPGGGPGGGGGFRGRGGRGGTQGAFGRGG) are compositionally biased toward gly residues. The span at 334 to 345 (ARGKHRKSKRAK) shows a compositional bias: basic residues. One can recognise a tr-type G domain in the interval 460–632 (PRPPVVTVMG…IVLTADGALE (173 aa)). The G1 stretch occupies residues 469-476 (GHVDHGKT). 469–476 (GHVDHGKT) is a GTP binding site. The tract at residues 494-498 (GITQH) is G2. Residues 519–522 (DTPG) are G3. GTP-binding positions include 519–523 (DTPGH) and 573–576 (NKVD). The G4 stretch occupies residues 573–576 (NKVD). The tract at residues 609–611 (SAR) is G5.

The protein belongs to the TRAFAC class translation factor GTPase superfamily. Classic translation factor GTPase family. IF-2 subfamily.

The protein localises to the cytoplasm. Functionally, one of the essential components for the initiation of protein synthesis. Protects formylmethionyl-tRNA from spontaneous hydrolysis and promotes its binding to the 30S ribosomal subunits. Also involved in the hydrolysis of GTP during the formation of the 70S ribosomal complex. The polypeptide is Translation initiation factor IF-2 (Kocuria rhizophila (strain ATCC 9341 / DSM 348 / NBRC 103217 / DC2201)).